Reading from the N-terminus, the 392-residue chain is Galactokinase (392 aa).

Alpha-D-galactose-binding residues include Arg37, Glu43, His44, and Asp46. Residues Gly136, Gly138, Ser140, and Ser141 each contribute to the ATP site. Asp186 contributes to the alpha-D-galactose binding site. The Proton acceptor role is filled by Asp186. At Ser230 the chain carries Phosphoserine. Tyr236 is a binding site for alpha-D-galactose.

The protein belongs to the GHMP kinase family. GalK subfamily. As to quaternary structure, homodimer.

The enzyme catalyses alpha-D-galactose + ATP = alpha-D-galactose 1-phosphate + ADP + H(+). Its pathway is carbohydrate metabolism; galactose metabolism. Catalyzes the transfer of a phosphate from ATP to alpha-D-galactose and participates in the first committed step in the catabolism of galactose. This Mus musculus (Mouse) protein is Galactokinase (Galk1).